A 555-amino-acid polypeptide reads, in one-letter code: Spermine oxidase (555 aa).

FAD-binding positions include Ala-35, Glu-55, Arg-63, 79 to 80 (TW), and Val-261. The segment at 271–307 (AHPRGPEIEPRGEGDHNHDTGEGGQSGENPQQGRWDE) is disordered. Residues 274-291 (RGPEIEPRGEGDHNHDTG) are compositionally biased toward basic and acidic residues. FAD contacts are provided by residues Glu-519 and 528–529 (TT).

The protein belongs to the flavin monoamine oxidase family. FAD is required as a cofactor. As to expression, widely expressed. Isoform 1 and isoform 2 are expressed at higher level in brain and skeletal muscle. Isoform 7 is found in brain and spleen, isoform 10 is widely expressed but found at lower level in heart, kidney, liver and lung.

The protein localises to the cytoplasm. Its subcellular location is the nucleus. It catalyses the reaction spermine + O2 + H2O = 3-aminopropanal + spermidine + H2O2. It functions in the pathway amine and polyamine degradation; spermine degradation. Its function is as follows. Flavoenzyme which catalyzes the oxidation of spermine to spermidine. Can also use N(1)-acetylspermine and spermidine as substrates, with different affinity depending on the isoform (isozyme) and on the experimental conditions. Plays an important role in the regulation of polyamine intracellular concentration and has the potential to act as a determinant of cellular sensitivity to the antitumor polyamine analogs. May contribute to beta-alanine production via aldehyde dehydrogenase conversion of 3-amino-propanal. The sequence is that of Spermine oxidase (Smox) from Mus musculus (Mouse).